A 207-amino-acid polypeptide reads, in one-letter code: Small ribosomal subunit protein uS4 (207 aa).

A disordered region spans residues 31-56 (KCKLDSKPGQHGRTSGARTSDYGNQL). Residues 42–53 (GRTSGARTSDYG) show a composition bias toward polar residues. An S4 RNA-binding domain is found at 97–157 (ARLDNVVYRM…EKSKKQVRIV (61 aa)).

It belongs to the universal ribosomal protein uS4 family. As to quaternary structure, part of the 30S ribosomal subunit. Contacts protein S5. The interaction surface between S4 and S5 is involved in control of translational fidelity.

Functionally, one of the primary rRNA binding proteins, it binds directly to 16S rRNA where it nucleates assembly of the body of the 30S subunit. With S5 and S12 plays an important role in translational accuracy. The protein is Small ribosomal subunit protein uS4 of Janthinobacterium sp. (strain Marseille) (Minibacterium massiliensis).